The chain runs to 446 residues: Maltoporin (446 aa).

The first 25 residues, 1–25 (MMITLRKLPLAVAVAAGVMSAQAMA), serve as a signal peptide directing secretion.

It belongs to the porin LamB (TC 1.B.3) family. In terms of assembly, homotrimer formed of three 18-stranded antiparallel beta-barrels, containing three independent channels.

It is found in the cell outer membrane. It carries out the reaction beta-maltose(in) = beta-maltose(out). Functionally, involved in the transport of maltose and maltodextrins. In Escherichia coli O6:K15:H31 (strain 536 / UPEC), this protein is Maltoporin.